The primary structure comprises 523 residues: 2-isopropylmalate synthase (523 aa).

The Pyruvate carboxyltransferase domain occupies valine 5 to tryptophan 267. Positions 14, 202, 204, and 238 each coordinate Mn(2+). The interval arginine 392–valine 523 is regulatory domain.

This sequence belongs to the alpha-IPM synthase/homocitrate synthase family. LeuA type 1 subfamily. Homodimer. Mn(2+) is required as a cofactor.

The protein resides in the cytoplasm. The enzyme catalyses 3-methyl-2-oxobutanoate + acetyl-CoA + H2O = (2S)-2-isopropylmalate + CoA + H(+). It participates in amino-acid biosynthesis; L-leucine biosynthesis; L-leucine from 3-methyl-2-oxobutanoate: step 1/4. Its function is as follows. Catalyzes the condensation of the acetyl group of acetyl-CoA with 3-methyl-2-oxobutanoate (2-ketoisovalerate) to form 3-carboxy-3-hydroxy-4-methylpentanoate (2-isopropylmalate). This is 2-isopropylmalate synthase from Escherichia coli O45:K1 (strain S88 / ExPEC).